We begin with the raw amino-acid sequence, 417 residues long: NADH-quinone oxidoreductase subunit D (417 aa).

The protein belongs to the complex I 49 kDa subunit family. As to quaternary structure, NDH-1 is composed of 14 different subunits. Subunits NuoB, C, D, E, F, and G constitute the peripheral sector of the complex.

It localises to the cell inner membrane. It catalyses the reaction a quinone + NADH + 5 H(+)(in) = a quinol + NAD(+) + 4 H(+)(out). Functionally, NDH-1 shuttles electrons from NADH, via FMN and iron-sulfur (Fe-S) centers, to quinones in the respiratory chain. The immediate electron acceptor for the enzyme in this species is believed to be ubiquinone. Couples the redox reaction to proton translocation (for every two electrons transferred, four hydrogen ions are translocated across the cytoplasmic membrane), and thus conserves the redox energy in a proton gradient. This chain is NADH-quinone oxidoreductase subunit D, found in Nitrosomonas eutropha (strain DSM 101675 / C91 / Nm57).